The sequence spans 1402 residues: MNHEVMNLFNPQSPAQTFDSIRISIASPEKILSWSYGEIKKPETINYRTFKPERDGLFCARIFGPIKDYECLCGKYKRMKYKGIICEKCGVEVTLSRVRRERMGHIELAAPVAHIWFLKSLPGRISTLLDLTLKDIERVLYFENYIVTEPGLTSLKLHQLLSEEEYMLAIDEFGEDQFTAMIGAEAIYELLASMELEKIANDLRAELSETTSELKQKKLIKRLKIVENFLESGNRPEWMIMKTIPVIPPDLRPLVPLDGGRFATSDLNDLYRRVINRNNRLKRLIELRAPGIIVRNEKRMVQEAVDALFDNGRRGRVITGANKRPLKSLSDMLKGKQGRFRQNLLGKRVDYSGRSVIVTGPELKLHQCGLPKKMALELFKPFIYARLDAKGYSSTVKQAKKLVEKEHPEVWDILDEVIREHPVLLNRAPTLHRLGIQAFEPVLIEGKAIQLHPLVCTAFNADFDGDQMAVHVPLSLEAQLEARVLMMSTNNILHPANGAPIIVPSQDMVLGLYYLSIVSEKEPGEGMVFSDIGELHHALENKVVTLHTKIKGRVKNIDKDGKEVAKLYDTTPGRLIIGELLPKNPSISFDIVNQEMTKKNISKMIDQVYRHCGQKETVIFCDRIMQLGFSHACRAGISFGKDDMLIPDSKLRLVAETEALAKEYEQQYNDGLITQGEKYNKVVDAWGKCTDRVADEMMKRIQAVEFDPKTGRQRPMNSIYMMSHSGARGSANQMKQLAGMRGLMAKPSGEIIETPIISNFKEGLTVNEYFNSTHGARKGLADTALKTANSGYLTRRLVDVAQDAIISAVDCGTAKGLTMQPIVDAGQIVASLGQRILGRTALVDILHPVSGEVILEGGAMIEEADVAKIEEAGIQSVQIRSALTCETRLGVCAKCYGRDLARGTPVNQGEAVGVIAAQSIGEPGTQLTMRTFHLGGTAQVVDSSHLEASYEGTVEIRNRNVVRNSEGHLVVMGRNMAILIKDGSGKERVVHRISYGAHIFVDDGDVVKCGQRIAEWDPYTRPILTEVEGYVGFEDMIDGLSVTETADESTGITKRLVIDWRANPRGADLKPAIIIHADKKGEAIAKYKGAEARYMMSVETILSVEPGSHVKAGDVIARLPMESAKTKDITGGLPRVAELFEARRPKDHAIIAEVSGTIRFGRGYKNKRRIIIEPNDETLEPVEYLIPKGKLFHFQEGDQIEKGDYILDGNPAPHDILAIKGVEALASYLVNEIQEVYRLQGVLINDKHIEVIVRQMLQKVEITESGDSGYIPGDHVDRIELDEINDNLLAEGKRPASGNPILLGITKASLQTPSFISAASFQETTRVLTEAAVSGKIDTLQGLKENVIVGRLIPAGTGGTIAQIRRIAAVRDDLIVDEQRKSGNNEVAKAMLTNMTTVTTVE.

C71, C73, C86, and C89 together coordinate Zn(2+). Mg(2+) is bound by residues D462, D464, and D466. Zn(2+) contacts are provided by C811, C885, C892, and C895.

This sequence belongs to the RNA polymerase beta' chain family. In terms of assembly, the RNAP catalytic core consists of 2 alpha, 1 beta, 1 beta' and 1 omega subunit. When a sigma factor is associated with the core the holoenzyme is formed, which can initiate transcription. The cofactor is Mg(2+). It depends on Zn(2+) as a cofactor.

The catalysed reaction is RNA(n) + a ribonucleoside 5'-triphosphate = RNA(n+1) + diphosphate. Functionally, DNA-dependent RNA polymerase catalyzes the transcription of DNA into RNA using the four ribonucleoside triphosphates as substrates. This chain is DNA-directed RNA polymerase subunit beta', found in Bartonella henselae (strain ATCC 49882 / DSM 28221 / CCUG 30454 / Houston 1) (Rochalimaea henselae).